The chain runs to 72 residues: Translation initiation factor IF-1 (72 aa).

Residues 1–72 (MAKEDSIEMQ…TKGRIVFRAR (72 aa)) enclose the S1-like domain.

Belongs to the IF-1 family. As to quaternary structure, component of the 30S ribosomal translation pre-initiation complex which assembles on the 30S ribosome in the order IF-2 and IF-3, IF-1 and N-formylmethionyl-tRNA(fMet); mRNA recruitment can occur at any time during PIC assembly.

It localises to the cytoplasm. In terms of biological role, one of the essential components for the initiation of protein synthesis. Stabilizes the binding of IF-2 and IF-3 on the 30S subunit to which N-formylmethionyl-tRNA(fMet) subsequently binds. Helps modulate mRNA selection, yielding the 30S pre-initiation complex (PIC). Upon addition of the 50S ribosomal subunit IF-1, IF-2 and IF-3 are released leaving the mature 70S translation initiation complex. This Shewanella amazonensis (strain ATCC BAA-1098 / SB2B) protein is Translation initiation factor IF-1.